A 189-amino-acid chain; its full sequence is UPF0316 protein Sca_1484 (189 aa).

3 helical membrane passes run 8-28 (PWLM…CLTV), 40-60 (VAAA…GLVM), and 66-86 (FQNI…GMKI).

It belongs to the UPF0316 family.

It localises to the cell membrane. The sequence is that of UPF0316 protein Sca_1484 from Staphylococcus carnosus (strain TM300).